Consider the following 398-residue polypeptide: Selection and upkeep of intraepithelial T-cells protein 8 (398 aa).

An N-terminal signal peptide occupies residues 1–25 (MMKPEFSHFFGFCVYFLFLQVMASS). The Ig-like V-type domain maps to 26–141 (EKLRVTTPTR…DVAIMNLNVT (116 aa)). The Extracellular segment spans residues 26–244 (EKLRVTTPTR…ANELFNQDYL (219 aa)). A disulfide bond links C49 and C123. N-linked (GlcNAc...) asparagine glycans are attached at residues N92 and N139. The 92-residue stretch at 142 to 233 (AVGLETEIHV…TGEEKQTSII (92 aa)) folds into the Ig-like C1-type domain. A disulfide bridge links C163 with C217. A helical transmembrane segment spans residues 245–265 (WVGIFPFSVLSLILFGVLPFI). Residues 266 to 288 (NSFFRSQGCASGCLSKCLPVVTS) lie on the Cytoplasmic side of the membrane. Residues 289–309 (WPVQIVHFLVCSGVLFAVYLP) form a helical membrane-spanning segment. Over 310-331 (HRYRVSLSDPQFPLYNNWITEL) the chain is Extracellular. A helical transmembrane segment spans residues 332 to 352 (LIVILFLTICFVLPITVLLLI). The Cytoplasmic segment spans residues 353-398 (KLSPTCLAKWEKNKDDIMDSQLGLGKAREASTLYEEQSRKSWEQEK).

It belongs to the SKINT family. Expressed in skin, thymus, testis and, to a lower extent, bladder, brain, heart, kidney, mammary gland, small intestine and uterus.

It is found in the membrane. In terms of biological role, may act by engaging a cell surface molecule on immature T-cells in the embryonic thymus. The protein is Selection and upkeep of intraepithelial T-cells protein 8 (Skint8) of Mus musculus (Mouse).